The chain runs to 229 residues: Urease accessory protein UreF (229 aa).

It belongs to the UreF family. In terms of assembly, ureD, UreF and UreG form a complex that acts as a GTP-hydrolysis-dependent molecular chaperone, activating the urease apoprotein by helping to assemble the nickel containing metallocenter of UreC. The UreE protein probably delivers the nickel.

It localises to the cytoplasm. In terms of biological role, required for maturation of urease via the functional incorporation of the urease nickel metallocenter. This is Urease accessory protein UreF from Ralstonia pickettii (strain 12J).